Here is a 112-residue protein sequence, read N- to C-terminus: Large ribosomal subunit protein uL22 (112 aa).

This sequence belongs to the universal ribosomal protein uL22 family. As to quaternary structure, part of the 50S ribosomal subunit.

Its function is as follows. This protein binds specifically to 23S rRNA; its binding is stimulated by other ribosomal proteins, e.g. L4, L17, and L20. It is important during the early stages of 50S assembly. It makes multiple contacts with different domains of the 23S rRNA in the assembled 50S subunit and ribosome. In terms of biological role, the globular domain of the protein is located near the polypeptide exit tunnel on the outside of the subunit, while an extended beta-hairpin is found that lines the wall of the exit tunnel in the center of the 70S ribosome. In Nitratidesulfovibrio vulgaris (strain DSM 19637 / Miyazaki F) (Desulfovibrio vulgaris), this protein is Large ribosomal subunit protein uL22.